Consider the following 133-residue polypeptide: Nucleoid-associated protein Mb3743c (133 aa).

Residues 98–133 (GAMRPPAPPAAPPGAPGMPGMPGMPGAPGAPPVPGI) form a disordered region. The span at 102–113 (PPAPPAAPPGAP) shows a compositional bias: pro residues.

This sequence belongs to the YbaB/EbfC family. Homodimer.

The protein resides in the cytoplasm. It localises to the nucleoid. Binds to DNA and alters its conformation. May be involved in regulation of gene expression, nucleoid organization and DNA protection. The polypeptide is Nucleoid-associated protein Mb3743c (Mycobacterium bovis (strain ATCC BAA-935 / AF2122/97)).